Consider the following 304-residue polypeptide: Type II methyltransferase M.ScaI (304 aa).

This sequence belongs to the N(4)/N(6)-methyltransferase family. N(4) subfamily.

It carries out the reaction a 2'-deoxycytidine in DNA + S-adenosyl-L-methionine = an N(4)-methyl-2'-deoxycytidine in DNA + S-adenosyl-L-homocysteine + H(+). Its function is as follows. A methylase that recognizes the double-stranded sequence 5'-AGTACT-3', methylates C-5 on both strands, and protects the DNA from cleavage by the ScaI endonuclease. This Streptomyces caespitosus protein is Type II methyltransferase M.ScaI.